We begin with the raw amino-acid sequence, 491 residues long: Chromosomal replication initiator protein DnaA (491 aa).

Positions 1–69 are domain I, interacts with DnaA modulators; it reads MTTWDKCLKK…TIQECHGNDL (69 aa). Positions 69–154 are domain II; sequence LIIEYSNKKF…KEDEEYSFGL (86 aa). A domain III, AAA+ region region spans residues 155 to 371; the sequence is PLKEKYVFDS…GALNRVLTTS (217 aa). ATP is bound by residues Gly199, Gly201, Lys202, and Thr203. The tract at residues 372–491 is domain IV, binds dsDNA; the sequence is KFNHKDPTIE…YELLLDKISR (120 aa).

It belongs to the DnaA family. In terms of assembly, oligomerizes as a right-handed, spiral filament on DNA at oriC.

It localises to the cytoplasm. Its function is as follows. Plays an essential role in the initiation and regulation of chromosomal replication. ATP-DnaA binds to the origin of replication (oriC) to initiate formation of the DNA replication initiation complex once per cell cycle. Binds the DnaA box (a 9 base pair repeat at the origin) and separates the double-stranded (ds)DNA. Forms a right-handed helical filament on oriC DNA; dsDNA binds to the exterior of the filament while single-stranded (ss)DNA is stabiized in the filament's interior. The ATP-DnaA-oriC complex binds and stabilizes one strand of the AT-rich DNA unwinding element (DUE), permitting loading of DNA polymerase. After initiation quickly degrades to an ADP-DnaA complex that is not apt for DNA replication. Binds acidic phospholipids. This chain is Chromosomal replication initiator protein DnaA, found in Francisella tularensis subsp. holarctica (strain LVS).